A 151-amino-acid chain; its full sequence is Protein Turandot Z (151 aa).

The signal sequence occupies residues 1 to 23 (MSRLIHLSFVLALLACLTGTISA).

This sequence belongs to the Turandot family.

Its subcellular location is the secreted. Its function is as follows. A humoral factor that may play a role in stress tolerance. In Drosophila persimilis (Fruit fly), this protein is Protein Turandot Z.